The sequence spans 634 residues: Probable beta-glucosidase C (634 aa).

An N-terminal signal peptide occupies residues 1–19 (MRIDCTVASLTALASGCQA). N-linked (GlcNAc...) asparagine glycans are attached at residues Asn90, Asn112, Asn219, and Asn270. Residue Asp337 is part of the active site. N-linked (GlcNAc...) asparagine glycans are attached at residues Asn360, Asn476, Asn484, and Asn524.

This sequence belongs to the glycosyl hydrolase 3 family.

The protein resides in the secreted. It carries out the reaction Hydrolysis of terminal, non-reducing beta-D-glucosyl residues with release of beta-D-glucose.. It functions in the pathway glycan metabolism; cellulose degradation. Its function is as follows. Beta-glucosidases are one of a number of cellulolytic enzymes involved in the degradation of cellulosic biomass. Catalyzes the last step releasing glucose from the inhibitory cellobiose. The sequence is that of Probable beta-glucosidase C (bglC) from Aspergillus flavus (strain ATCC 200026 / FGSC A1120 / IAM 13836 / NRRL 3357 / JCM 12722 / SRRC 167).